The following is a 238-amino-acid chain: Ubiquinone biosynthesis O-methyltransferase (238 aa).

4 residues coordinate S-adenosyl-L-methionine: R40, G59, D81, and M126.

It belongs to the methyltransferase superfamily. UbiG/COQ3 family.

The catalysed reaction is a 3-demethylubiquinol + S-adenosyl-L-methionine = a ubiquinol + S-adenosyl-L-homocysteine + H(+). It carries out the reaction a 3-(all-trans-polyprenyl)benzene-1,2-diol + S-adenosyl-L-methionine = a 2-methoxy-6-(all-trans-polyprenyl)phenol + S-adenosyl-L-homocysteine + H(+). The protein operates within cofactor biosynthesis; ubiquinone biosynthesis. In terms of biological role, O-methyltransferase that catalyzes the 2 O-methylation steps in the ubiquinone biosynthetic pathway. In Neisseria meningitidis serogroup C (strain 053442), this protein is Ubiquinone biosynthesis O-methyltransferase.